Reading from the N-terminus, the 1066-residue chain is Isoleucine--tRNA ligase (1066 aa).

The 'HIGH' region motif lies at 49–59 (PYVSGAIHLGT). The 'KMSKS' region motif lies at 625-629 (KMSKS). Lys-628 is a binding site for ATP.

Belongs to the class-I aminoacyl-tRNA synthetase family. IleS type 2 subfamily. Monomer. Requires Zn(2+) as cofactor.

Its subcellular location is the cytoplasm. It carries out the reaction tRNA(Ile) + L-isoleucine + ATP = L-isoleucyl-tRNA(Ile) + AMP + diphosphate. Functionally, catalyzes the attachment of isoleucine to tRNA(Ile). As IleRS can inadvertently accommodate and process structurally similar amino acids such as valine, to avoid such errors it has two additional distinct tRNA(Ile)-dependent editing activities. One activity is designated as 'pretransfer' editing and involves the hydrolysis of activated Val-AMP. The other activity is designated 'posttransfer' editing and involves deacylation of mischarged Val-tRNA(Ile). The polypeptide is Isoleucine--tRNA ligase (Pyrococcus horikoshii (strain ATCC 700860 / DSM 12428 / JCM 9974 / NBRC 100139 / OT-3)).